A 102-amino-acid polypeptide reads, in one-letter code: MIIKLSLINIEFLKRMRYRDFEKKRKILECLKKNQNQAKQLRNHLWQLKVSKNNKSRLTKQVDRCCLTGRTKAYIKNFNLSRHAANLHAFEGLLQNTKTKSW.

Belongs to the universal ribosomal protein uS14 family.

The protein localises to the mitochondrion. This chain is Small ribosomal subunit protein uS14m (RPS14), found in Paramecium tetraurelia.